The chain runs to 406 residues: Putative cyclin-F3-2 (406 aa).

Residues 1–107 (MARPRTRSVA…PGAAGGPWQL (107 aa)) form a disordered region. Composition is skewed to low complexity over residues 11 to 21 (RMEATAAAAAA) and 29 to 57 (NPDG…NAGE).

Belongs to the cyclin family. Cyclin F subfamily.

The polypeptide is Putative cyclin-F3-2 (CYCF3-2) (Oryza sativa subsp. japonica (Rice)).